The sequence spans 292 residues: Carbapenem-hydrolyzing beta-lactamase transcriptional activator (292 aa).

An HTH lysR-type domain is found at 5–62 (IPLNALRAFEASARYLNFTKAGLELHVSQAAVSQHVRTLEAILGVNLFKRLPRGLQLT). Residues 22-41 (FTKAGLELHVSQAAVSQHVR) constitute a DNA-binding region (H-T-H motif).

The protein belongs to the LysR transcriptional regulatory family.

Functionally, this protein is a positive regulator of gene expression of carbapenem-hydrolyzing beta-lactamase (smeA). Seems to also be a repressor of its own transcription. This chain is Carbapenem-hydrolyzing beta-lactamase transcriptional activator (smeR), found in Serratia marcescens.